A 396-amino-acid chain; its full sequence is Dihydrolipoyllysine-residue acetyltransferase component of pyruvate dehydrogenase complex (396 aa).

In terms of domain architecture, Lipoyl-binding spans 1 to 69; it reads MPDIGLEEVE…KTDALIMRCE (69 aa). K35 is subject to N6-lipoyllysine. One can recognise a Peripheral subunit-binding (PSBD) domain in the interval 104–141; it reads HATPLIRRLARNLNINLYDVVGTGPKNRILKEDLDLYQ. H369 is a catalytic residue.

It belongs to the 2-oxoacid dehydrogenase family. In terms of assembly, forms a 24-polypeptide structural core with octahedral symmetry. (R)-lipoate is required as a cofactor.

The enzyme catalyses N(6)-[(R)-dihydrolipoyl]-L-lysyl-[protein] + acetyl-CoA = N(6)-[(R)-S(8)-acetyldihydrolipoyl]-L-lysyl-[protein] + CoA. Its function is as follows. The pyruvate dehydrogenase complex catalyzes the overall conversion of pyruvate to acetyl-CoA and CO(2). It contains multiple copies of three enzymatic components: pyruvate dehydrogenase (E1), dihydrolipoamide acetyltransferase (E2) and lipoamide dehydrogenase (E3). The protein is Dihydrolipoyllysine-residue acetyltransferase component of pyruvate dehydrogenase complex (aceF) of Buchnera aphidicola subsp. Acyrthosiphon pisum (strain APS) (Acyrthosiphon pisum symbiotic bacterium).